Here is a 380-residue protein sequence, read N- to C-terminus: Mitogen-activated protein kinase 3 (380 aa).

Ala-2 is subject to N-acetylalanine. One can recognise a Protein kinase domain in the interval 43–331 (YTQLQYIGEG…VEEALAHPYL (289 aa)). ATP is bound by residues 49 to 57 (IGEGAYGMV) and Lys-72. The Proton acceptor role is filled by Asp-167. Thr-199 carries the post-translational modification Phosphothreonine. The residue at position 203 (Thr-203) is a Phosphothreonine; by MAP2K1 and MAP2K2. The TXY motif lies at 203-205 (TEY). Residue Tyr-205 is modified to Phosphotyrosine; by MAP2K1 and MAP2K2. Thr-208 carries the phosphothreonine; by autocatalysis modification.

It belongs to the protein kinase superfamily. CMGC Ser/Thr protein kinase family. MAP kinase subfamily. Binds both upstream activators and downstream substrates in multimolecular complexes. Found in a complex with at least BRAF, HRAS, MAP2K1/MEK1, MAPK3 and RGS14. Interacts with TPR. Interacts with ADAM15, ARRB2, CANX, DAPK1 (via death domain), HSF4, IER3, MAP2K1/MEK1, NISCH, and SGK1. Interacts with MORG1. Interacts with PEA15. Interacts with isoform 1 of MKNK2 and this binding prevents from dephosphorylation and inactivation. Interacts with CDKN2AIP. Interacts with HSF1 (via D domain and preferentially with hyperphosphorylated form); this interaction occurs upon heat shock. Interacts with CAVIN4. Interacts with GIT1; this interaction is necessary for MAPK3 localization to focal adhesions. Interacts with ZNF263. Interacts with EBF4. Requires Mg(2+) as cofactor. Dually phosphorylated on Thr-203 and Tyr-205, which activates the enzyme. Ligand-activated ALK induces tyrosine phosphorylation. Dephosphorylated by PTPRJ at Tyr-205. Autophosphorylated on threonine and tyrosine residues in vitro. Phosphorylated upon FLT3 and KIT signaling. Post-translationally, ubiquitinated by TRIM15 via 'Lys-63'-linked ubiquitination; leading to activation. Deubiquitinated by CYLD.

The protein localises to the cytoplasm. It is found in the nucleus. The protein resides in the membrane. Its subcellular location is the caveola. It localises to the cell junction. The protein localises to the focal adhesion. It catalyses the reaction L-seryl-[protein] + ATP = O-phospho-L-seryl-[protein] + ADP + H(+). The enzyme catalyses L-threonyl-[protein] + ATP = O-phospho-L-threonyl-[protein] + ADP + H(+). With respect to regulation, phosphorylated by MAP2K1/MEK1 and MAP2K2/MEK2 on Thr-203 and Tyr-205 in response to external stimuli like insulin or NGF. Both phosphorylations are required for activity. This phosphorylation causes dramatic conformational changes, which enable full activation and interaction of MAPK1/ERK2 with its substrates. Dephosphorylated and inactivated by DUSP3, DUSP6 and DUSP9. In terms of biological role, serine/threonine kinase which acts as an essential component of the MAP kinase signal transduction pathway. MAPK1/ERK2 and MAPK3/ERK1 are the 2 MAPKs which play an important role in the MAPK/ERK cascade. They participate also in a signaling cascade initiated by activated KIT and KITLG/SCF. Depending on the cellular context, the MAPK/ERK cascade mediates diverse biological functions such as cell growth, adhesion, survival and differentiation through the regulation of transcription, translation, cytoskeletal rearrangements. The MAPK/ERK cascade also plays a role in initiation and regulation of meiosis, mitosis, and postmitotic functions in differentiated cells by phosphorylating a number of transcription factors. About 160 substrates have already been discovered for ERKs. Many of these substrates are localized in the nucleus, and seem to participate in the regulation of transcription upon stimulation. However, other substrates are found in the cytosol as well as in other cellular organelles, and those are responsible for processes such as translation, mitosis and apoptosis. Moreover, the MAPK/ERK cascade is also involved in the regulation of the endosomal dynamics, including lysosome processing and endosome cycling through the perinuclear recycling compartment (PNRC); as well as in the fragmentation of the Golgi apparatus during mitosis. The substrates include transcription factors (such as ATF2, BCL6, ELK1, ERF, FOS, HSF4 or SPZ1), cytoskeletal elements (such as CANX, CTTN, GJA1, MAP2, MAPT, PXN, SORBS3 or STMN1), regulators of apoptosis (such as BAD, BTG2, CASP9, DAPK1, IER3, MCL1 or PPARG), regulators of translation (such as EIF4EBP1) and a variety of other signaling-related molecules (like ARHGEF2, DEPTOR, FRS2 or GRB10). Protein kinases (such as RAF1, RPS6KA1/RSK1, RPS6KA3/RSK2, RPS6KA2/RSK3, RPS6KA6/RSK4, SYK, MKNK1/MNK1, MKNK2/MNK2, RPS6KA5/MSK1, RPS6KA4/MSK2, MAPKAPK3 or MAPKAPK5) and phosphatases (such as DUSP1, DUSP4, DUSP6 or DUSP16) are other substrates which enable the propagation the MAPK/ERK signal to additional cytosolic and nuclear targets, thereby extending the specificity of the cascade. This Mus musculus (Mouse) protein is Mitogen-activated protein kinase 3 (Mapk3).